A 309-amino-acid chain; its full sequence is Metal ABC transporter substrate-binding lipoprotein SsaB (309 aa).

A signal peptide spans Met1–Ala19. Residue Cys20 is the site of N-palmitoyl cysteine attachment. A lipid anchor (S-diacylglycerol cysteine) is attached at Cys20. Positions 67, 139, 205, and 280 each coordinate a divalent metal cation.

This sequence belongs to the bacterial solute-binding protein 9 family. Lipoprotein receptor antigen (Lrai) subfamily. In terms of assembly, homodimer and homotrimer.

The protein resides in the cell membrane. Its function is as follows. Part of an ATP-binding cassette (ABC) transport system involved in metal import. Binds a metal with high affinity and specificity and delivers it to the membrane permease for translocation into the cytoplasm. Also acts as an adhesin which is involved on adherence to extracellular matrix. It is an important factor in the pathogenesis and infection. May contribute to the formation and accumulation of dental plaque. In Streptococcus sanguinis, this protein is Metal ABC transporter substrate-binding lipoprotein SsaB (ssaB).